A 299-amino-acid polypeptide reads, in one-letter code: 4-hydroxy-tetrahydrodipicolinate synthase 2 (299 aa).

Thr54 provides a ligand contact to pyruvate. Residue Tyr142 is the Proton donor/acceptor of the active site. The Schiff-base intermediate with substrate role is filled by Lys170. Val210 contacts pyruvate.

Belongs to the DapA family. Homotetramer; dimer of dimers.

The protein resides in the cytoplasm. It carries out the reaction L-aspartate 4-semialdehyde + pyruvate = (2S,4S)-4-hydroxy-2,3,4,5-tetrahydrodipicolinate + H2O + H(+). Its pathway is amino-acid biosynthesis; L-lysine biosynthesis via DAP pathway; (S)-tetrahydrodipicolinate from L-aspartate: step 3/4. Catalyzes the condensation of (S)-aspartate-beta-semialdehyde [(S)-ASA] and pyruvate to 4-hydroxy-tetrahydrodipicolinate (HTPA). The protein is 4-hydroxy-tetrahydrodipicolinate synthase 2 of Streptomyces coelicolor (strain ATCC BAA-471 / A3(2) / M145).